Reading from the N-terminus, the 257-residue chain is Tryptophan synthase alpha chain (257 aa).

Catalysis depends on proton acceptor residues E47 and D58.

Belongs to the TrpA family. As to quaternary structure, tetramer of two alpha and two beta chains.

It catalyses the reaction (1S,2R)-1-C-(indol-3-yl)glycerol 3-phosphate + L-serine = D-glyceraldehyde 3-phosphate + L-tryptophan + H2O. Its pathway is amino-acid biosynthesis; L-tryptophan biosynthesis; L-tryptophan from chorismate: step 5/5. The alpha subunit is responsible for the aldol cleavage of indoleglycerol phosphate to indole and glyceraldehyde 3-phosphate. The chain is Tryptophan synthase alpha chain from Listeria monocytogenes serotype 4b (strain F2365).